The sequence spans 324 residues: Palmitoyltransferase SWF1 (324 aa).

A topological domain (lumenal) is located at residue Met-1. The chain crosses the membrane as a helical span at residues 2–22 (FLLFLLFVVSQVGLLVFSPKF). The Cytoplasmic portion of the chain corresponds to 23–49 (KDLILFRWYYQHIYYPLFTDYTRYRWK). The chain crosses the membrane as a helical span at residues 50 to 70 (YWLVPGFYACILIFCVHLFYN). The Lumenal segment spans residues 71–84 (KLNDTVNPYLYSLE). Residues 85–105 (KAFIPITIAFTSLTGVASVFV) traverse the membrane as a helical segment. The Cytoplasmic portion of the chain corresponds to 106 to 173 (KPLGLQAGPQ…VGYGNYEYFY (68 aa)). Residues 127–177 (AVCQTCKTIKVPRSKHCPICERCIPLHDHHCIWINNCVGYGNYEYFYSFLL) enclose the DHHC domain. The chain crosses the membrane as a helical span at residues 174 to 194 (SFLLSNCLLLTYASLRLLTLF). Residues 195-203 (RITAFKKDK) are Lumenal-facing. Residues 204–224 (FFLSLFLLTTAFSLIAIVFTY) form a helical membrane-spanning segment. Topologically, residues 225–324 (YQLKLVNDGM…NLKERIHLLD (100 aa)) are cytoplasmic.

This sequence belongs to the DHHC palmitoyltransferase family. SWF1 subfamily.

The protein localises to the endoplasmic reticulum membrane. The catalysed reaction is L-cysteinyl-[protein] + hexadecanoyl-CoA = S-hexadecanoyl-L-cysteinyl-[protein] + CoA. Functionally, palmitoyltransferase that targets several endosomal SNAREs. Palmitoylates the SNAREs at cysteine residues close to the cytoplasmic end of their transmembrane domain. May have a role in the cellular quality control of transmembrane domain-containing proteins. This Kluyveromyces lactis (strain ATCC 8585 / CBS 2359 / DSM 70799 / NBRC 1267 / NRRL Y-1140 / WM37) (Yeast) protein is Palmitoyltransferase SWF1 (SWF1).